The sequence spans 671 residues: K(+)-insensitive pyrophosphate-energized proton pump (671 aa).

5 consecutive transmembrane segments (helical) span residues Ser3 to Ala23, Thr57 to Leu77, Ile79 to Ser99, Ala128 to Leu148, and Val156 to Phe176. Lys178 lines the substrate pocket. The Mg(2+) site is built by Asp181, Asp185, Asn208, and Asp211. A run of 6 helical transmembrane segments spans residues Leu223 to Gly243, Ile249 to Phe269, Gly285 to Met305, Leu310 to Tyr330, Leu366 to Ala386, and Ile391 to Val411. Residue Asp421 participates in Mg(2+) binding. Transmembrane regions (helical) follow at residues Ala452–Asp472, Val490–Met510, Met558–Pro578, and Ala580–Asp600. Residues Asp607, Asp633, and Asp637 each coordinate Ca(2+). Lys640 is a binding site for substrate. The helical transmembrane segment at Ala646–Ile666 threads the bilayer.

This sequence belongs to the H(+)-translocating pyrophosphatase (TC 3.A.10) family. K(+)-insensitive subfamily. As to quaternary structure, homodimer. It depends on Mg(2+) as a cofactor.

The protein localises to the cell membrane. It carries out the reaction diphosphate + H2O + H(+)(in) = 2 phosphate + 2 H(+)(out). Proton pump that utilizes the energy of pyrophosphate hydrolysis as the driving force for proton movement across the membrane. Generates a proton motive force. In Methanosarcina acetivorans (strain ATCC 35395 / DSM 2834 / JCM 12185 / C2A), this protein is K(+)-insensitive pyrophosphate-energized proton pump.